The primary structure comprises 679 residues: Enzymatic polyprotein (679 aa).

The tract at residues Leu-40–Asp-130 is protease. Asp-45 is a catalytic residue. The region spanning Leu-272 to Ile-452 is the Reverse transcriptase domain.

It belongs to the caulimoviridae enzymatic polyprotein family.

The enzyme catalyses DNA(n) + a 2'-deoxyribonucleoside 5'-triphosphate = DNA(n+1) + diphosphate. Functionally, encodes for at least two polypeptides: protease (PR) and reverse transcriptase (RT). The protease processes the polyprotein in cis. Reverse transcriptase is multifunctional enzyme that converts the viral RNA genome into dsDNA in viral cytoplasmic capsids. This enzyme displays a DNA polymerase activity that can copy either DNA or RNA templates, and a ribonuclease H (RNase H) activity that cleaves the RNA strand of RNA-DNA heteroduplexes in a partially processive 3'- to 5'-endonucleasic mode. Neo-synthesized pregenomic RNA (pgRNA) are encapsidated, and reverse-transcribed inside the nucleocapsid. Partial (+)DNA is synthesized from the (-)DNA template and generates the relaxed circular DNA (RC-DNA) genome. After budding and infection, the RC-DNA migrates in the nucleus, and is converted into a plasmid-like covalently closed circular DNA (cccDNA). This is Enzymatic polyprotein from Cauliflower mosaic virus (strain BBC) (CaMV).